The primary structure comprises 134 residues: Profilin-5 (134 aa).

The protein belongs to the profilin family. Occurs in many kinds of cells as a complex with monomeric actin in a 1:1 ratio. In terms of tissue distribution, specifically expressed in mature pollen grains. Expressed in germinating pollen grains. Expressed in growing pollen tubes (at protein level).

Its subcellular location is the cytoplasm. The protein resides in the cytoskeleton. In terms of biological role, binds to actin monomers and regulates the organization of the actin cytoskeleton. At high concentrations, profilin prevents the polymerization of actin, whereas it enhances it at low concentrations. At low concentrations, associates with the poly-proline motif of formins to enhance actin filament elongation rate. Acts redundantly with PRF4 to regulate apical actin polymerization at the tip of pollen tube and control polarized pollen tube growth. Functions probably by favoring formin-mediated actin polymerization at pollen tube tips. This chain is Profilin-5, found in Arabidopsis thaliana (Mouse-ear cress).